Here is a 351-residue protein sequence, read N- to C-terminus: Nicotinate-nucleotide--dimethylbenzimidazole phosphoribosyltransferase (351 aa).

Glu-318 serves as the catalytic Proton acceptor.

It belongs to the CobT family.

The enzyme catalyses 5,6-dimethylbenzimidazole + nicotinate beta-D-ribonucleotide = alpha-ribazole 5'-phosphate + nicotinate + H(+). It functions in the pathway nucleoside biosynthesis; alpha-ribazole biosynthesis; alpha-ribazole from 5,6-dimethylbenzimidazole: step 1/2. In terms of biological role, catalyzes the synthesis of alpha-ribazole-5'-phosphate from nicotinate mononucleotide (NAMN) and 5,6-dimethylbenzimidazole (DMB). This chain is Nicotinate-nucleotide--dimethylbenzimidazole phosphoribosyltransferase, found in Shewanella frigidimarina (strain NCIMB 400).